A 225-amino-acid chain; its full sequence is Putative adhesin RT0816 (225 aa).

Residues 1-22 (MKKLLLIAATSATILSSSISFA) form the signal peptide.

This Rickettsia typhi (strain ATCC VR-144 / Wilmington) protein is Putative adhesin RT0816.